Reading from the N-terminus, the 260-residue chain is Homeobox protein CDX-1 (260 aa).

The segment at residues 149–208 (KDKYRVVYTDHQRLELEKEFHYSRYITIRRKAELAAALGLTERQVKIWFQNRRAKERKVN) is a DNA-binding region (homeobox). Positions 152–173 (YRVVYTDHQRLELEKEFHYSRY) are interaction with DNA. Residues 191 to 202 (RQVKIWFQNRRA) form an interaction with 5-mCpG DNA region. The disordered stretch occupies residues 204–260 (ERKVNKKKLQQQSQPTSTTTPTPPAVGTPGPMGTLCSGSAPSLVSSSPLTIKEEFMP). Low complexity-rich tracts occupy residues 213–223 (QQQSQPTSTTT) and 240–252 (SGSA…SSPL).

It belongs to the Caudal homeobox family.

It localises to the nucleus. Functionally, plays a role in transcriptional regulation. Involved in activated KRAS-mediated transcriptional activation of PRKD1. Binds to the PRKD1 promoter. Could play a role in the terminal differentiation of the intestine. Binds preferentially to methylated DNA. This is Homeobox protein CDX-1 (CDX1) from Gallus gallus (Chicken).